A 303-amino-acid polypeptide reads, in one-letter code: Growth/differentiation factor 15 (303 aa).

The first 30 residues, 1 to 30 (MALRALHAQPTGGPQLRFLLFLLLLLLLLS), serve as a signal peptide directing secretion. A propeptide spanning residues 31-188 (WPSQGDALAL…LRSAAGRGRR (158 aa)) is cleaved from the precursor. N-linked (GlcNAc...) asparagine glycosylation is present at asparagine 71. 4 disulfide bridges follow: cysteine 198/cysteine 205, cysteine 206/cysteine 269, cysteine 235/cysteine 300, and cysteine 239/cysteine 302.

The protein belongs to the TGF-beta family. Homodimer; disulfide-linked. Interacts with GFRAL and RET; ligand of GFRAL, which mediates GDF15 internalization and cellular signaling through interaction with RET via the formation of a 2:2:2 ternary complex composed of GDF15, GFRAL and RET. As to expression, detected in plasma (at protein level).

The protein resides in the secreted. Its function is as follows. Hormone produced in response to various stresses to confer information about those stresses to the brain, and trigger an aversive response, characterized by nausea and/or loss of appetite. The aversive response is both required to reduce continuing exposure to those stresses at the time of exposure and to promote avoidance behavior in the future. Acts by binding to its receptor, GFRAL, activating GFRAL-expressing neurons localized in the area postrema and nucleus tractus solitarius of the brainstem. It then triggers the activation of neurons localized within the parabrachial nucleus and central amygdala, which constitutes part of the 'emergency circuit' that shapes responses to stressful conditions. The GDF15-GFRAL signal induces expression of genes involved in metabolism, such as lipid metabolism in adipose tissues. Contributes to the effect of metformin, an anti-diabetic drug, on appetite reduction and weight loss: produced in the kidney in response to metformin treatment, thereby activating the GDF15-GFRAL response, leading to reduced appetite and weight. Required for avoidance behavior in response to food allergens: induced downstream of mast cell activation to promote aversion and minimize harmful effects of exposure to noxious substances. Produced in response to anticancer drugs, such as camptothecin or cisplatin, promoting nausea and contributing to malnutrition. Overproduced in many cancers, promoting anorexia in cancer (cachexia). Responsible for the risk of nausea during pregnancy: high levels of GDF15 during pregnancy, mostly originating from embryos, are associated with increased nausea. Maternal sensitivity to nausea is probably determined by pre-pregnancy exposure to GDF15, females with naturally high level of GDF15 being less susceptible to nausea than female rats with low levels of GDF15 before pregnancy. Promotes metabolic adaptation in response to systemic inflammation caused by bacterial and viral infections in order to promote tissue tolerance and prevent tissue damage. Required for tissue tolerance in response to myocardial infarction by acting as an inhibitor of leukocyte integring activation, thereby protecting against cardiac rupture. Inhibits growth hormone signaling on hepatocytes. The polypeptide is Growth/differentiation factor 15 (Rattus norvegicus (Rat)).